The sequence spans 199 residues: Ras-related protein Rab-7b (199 aa).

GTP-binding positions include 15–22, 34–40, 63–67, 124–127, and 154–155; these read GAIGVGKT, YEEYQTT, DTGGQ, NKID, and AK. 2 short sequence motifs (switch) span residues 28–41 and 67–82; these read YVHK…QTTL and QERF…KGSD. Ser-186 is modified (phosphoserine). 2 S-geranylgeranyl cysteine lipidation sites follow: Cys-198 and Cys-199.

This sequence belongs to the small GTPase superfamily. Rab family. Expressed in heart, placenta, lung, skeletal muscle and peripheral blood leukocyte.

Its subcellular location is the late endosome. The protein localises to the lysosome. It is found in the golgi apparatus. It localises to the trans-Golgi network. The protein resides in the cytoplasmic vesicle. Its subcellular location is the phagosome. The protein localises to the phagosome membrane. Functionally, controls vesicular trafficking from endosomes to the trans-Golgi network (TGN). Acts as a negative regulator of TLR9 signaling and can suppress TLR9-triggered TNFA, IL6, and IFNB production in macrophages by promoting TLR9 lysosomal degradation. Also negatively regulates TLR4 signaling in macrophages by promoting lysosomal degradation of TLR4. Promotes megakaryocytic differentiation by increasing NF-kappa-B-dependent IL6 production and subsequently enhancing the association of STAT3 with GATA1. Not involved in the regulation of the EGF- and EGFR degradation pathway. This Homo sapiens (Human) protein is Ras-related protein Rab-7b (RAB7B).